The primary structure comprises 424 residues: Trigger factor (424 aa).

Residues 163–248 (GDTVVLDFEG…IHEIKAKELP (86 aa)) enclose the PPIase FKBP-type domain.

This sequence belongs to the FKBP-type PPIase family. Tig subfamily.

It localises to the cytoplasm. The enzyme catalyses [protein]-peptidylproline (omega=180) = [protein]-peptidylproline (omega=0). In terms of biological role, involved in protein export. Acts as a chaperone by maintaining the newly synthesized protein in an open conformation. Functions as a peptidyl-prolyl cis-trans isomerase. This is Trigger factor from Bacillus pumilus (strain SAFR-032).